Consider the following 331-residue polypeptide: Nacrein-like protein P1 (331 aa).

Positions 1–331 (QSPINIVSYD…LHALRNVEGY (331 aa)) constitute an Alpha-carbonic anhydrase domain. The Zn(2+) site is built by H69, H71, and H94. A disordered region spans residues 138–240 (DEPDDEECKR…GENGHKHGCR (103 aa)). Positions 144–156 (ECKRILKGHHPDN) are enriched in basic and acidic residues. Residues 157–232 (NENGNGDNGN…NNGENGNNGE (76 aa)) show a composition bias toward low complexity. A run of 24 repeats spans residues 162-164 (GDN), 165-167 (GNN), 168-170 (GYN), 171-173 (GDN), 174-176 (GNN), 177-179 (GDN), 180-182 (GNN), 183-185 (GYN), 186-188 (GDN), 189-191 (GNN), 192-194 (GDN), 195-197 (GNN), 198-200 (GYN), 201-203 (GDN), 204-206 (GNN), 207-209 (GDN), 210-212 (GNN), 213-215 (GEN), 216-218 (GNN), 219-221 (GEN), 222-224 (GNN), 225-227 (GEN), 228-229 (GN), and 231-233 (GEN). The 24 X 3 AA approximate tandem repeats of G-X-N stretch occupies residues 162–233 (GDNGNNGYNG…NGENGNNGEN (72 aa)). 298 to 299 (TT) contributes to the substrate binding site.

Belongs to the alpha-carbonic anhydrase family. In terms of assembly, homooligomer; disulfide-linked. May also be disulfide-linked to insoluble organic matrix. The cofactor is Zn(2+). As to expression, expressed in the mantle.

It is found in the secreted. The protein resides in the extracellular space. It localises to the extracellular matrix. It catalyses the reaction hydrogencarbonate + H(+) = CO2 + H2O. Acts as a negative regulator for calcification in the shells of mollusks. May function both as a calcium concentrator and as a carbonic anhydrase required for production of carbonate ions, which are assembled to CaCO(3) at mineralization sites. Is important for shell formation in both the calcitic prismatic layer and the aragonitic nacreous layer. Shows inhibitory activity of crystal formation when present in free state but, when attached to the insoluble matrix, may regulate the form and size of aragonite crystal. This chain is Nacrein-like protein P1, found in Mizuhopecten yessoensis (Japanese scallop).